Reading from the N-terminus, the 588-residue chain is Probable G-protein coupled receptor 162 (588 aa).

Over 1 to 17 (MARGGAGAEEASLRSNA) the chain is Extracellular. The helical transmembrane segment at 18–38 (LSWLACGLLALLANAWIILSI) threads the bilayer. Residues 39 to 49 (SAKQQKHKPLE) are Cytoplasmic-facing. The helical transmembrane segment at 50 to 70 (LLLCFLAGTHILMAAVPLTTF) threads the bilayer. At 71–91 (AVVQLRRQASSDYDWNESICK) the chain is on the extracellular side. Residue asparagine 86 is glycosylated (N-linked (GlcNAc...) asparagine). The chain crosses the membrane as a helical span at residues 92-112 (VFVSTYYTLALATCFTVASLS). Residues 113 to 133 (YHRMWMVRWPVNYRLSNAKKQ) are Cytoplasmic-facing. Residues 134–154 (ALHAVMGIWMVSFILSTLPSI) form a helical membrane-spanning segment. The Extracellular segment spans residues 155–174 (GWHNNGERYYARGCQFIVSK). A helical membrane pass occupies residues 175–195 (IGLGFGVCFSLLLLGGIVMGL). The Cytoplasmic portion of the chain corresponds to 196–275 (VCVAITFYQT…SLQVTNLVSA (80 aa)). A helical membrane pass occupies residues 276-296 (IVFLYDSLTGVPILVVSFFSL). The Extracellular portion of the chain corresponds to 297 to 303 (KSDSAPP). The chain crosses the membrane as a helical span at residues 304–324 (WMVLAVLWCSMAQTLLLPSFI). Topologically, residues 325–588 (WSCERYRADV…GNPIFPQLTL (264 aa)) are cytoplasmic. Phosphoserine occurs at positions 413 and 435. 2 disordered regions span residues 445 to 474 (QSRALGGPPEYLGQRHRLEDEEDEEEAEGG) and 511 to 550 (ETPLPSPTASPGHSPRRPRPLGLSPRRLSLGSPESRAVGL). The segment covering 530–546 (PLGLSPRRLSLGSPESR) has biased composition (low complexity).

The protein belongs to the G-protein coupled receptor 1 family.

Its subcellular location is the cell membrane. Its function is as follows. Orphan receptor. The sequence is that of Probable G-protein coupled receptor 162 (GPR162) from Homo sapiens (Human).